The sequence spans 357 residues: UDP-N-acetylglucosamine--N-acetylmuramyl-(pentapeptide) pyrophosphoryl-undecaprenol N-acetylglucosamine transferase (357 aa).

Residues Thr-12–Gly-14, Arg-166, Ser-196, and Gln-291 each bind UDP-N-acetyl-alpha-D-glucosamine.

The protein belongs to the glycosyltransferase 28 family. MurG subfamily.

The protein localises to the cell membrane. It catalyses the reaction di-trans,octa-cis-undecaprenyl diphospho-N-acetyl-alpha-D-muramoyl-L-alanyl-D-glutamyl-meso-2,6-diaminopimeloyl-D-alanyl-D-alanine + UDP-N-acetyl-alpha-D-glucosamine = di-trans,octa-cis-undecaprenyl diphospho-[N-acetyl-alpha-D-glucosaminyl-(1-&gt;4)]-N-acetyl-alpha-D-muramoyl-L-alanyl-D-glutamyl-meso-2,6-diaminopimeloyl-D-alanyl-D-alanine + UDP + H(+). Its pathway is cell wall biogenesis; peptidoglycan biosynthesis. Functionally, cell wall formation. Catalyzes the transfer of a GlcNAc subunit on undecaprenyl-pyrophosphoryl-MurNAc-pentapeptide (lipid intermediate I) to form undecaprenyl-pyrophosphoryl-MurNAc-(pentapeptide)GlcNAc (lipid intermediate II). The chain is UDP-N-acetylglucosamine--N-acetylmuramyl-(pentapeptide) pyrophosphoryl-undecaprenol N-acetylglucosamine transferase from Geobacillus kaustophilus (strain HTA426).